A 415-amino-acid chain; its full sequence is Serine hydroxymethyltransferase (415 aa).

(6S)-5,6,7,8-tetrahydrofolate contacts are provided by residues leucine 121 and 125-127; that span reads GHL. The residue at position 229 (lysine 229) is an N6-(pyridoxal phosphate)lysine. Residue 352–354 coordinates (6S)-5,6,7,8-tetrahydrofolate; sequence SPF.

Belongs to the SHMT family. In terms of assembly, homodimer. Pyridoxal 5'-phosphate is required as a cofactor.

The protein localises to the cytoplasm. The catalysed reaction is (6R)-5,10-methylene-5,6,7,8-tetrahydrofolate + glycine + H2O = (6S)-5,6,7,8-tetrahydrofolate + L-serine. The protein operates within one-carbon metabolism; tetrahydrofolate interconversion. It participates in amino-acid biosynthesis; glycine biosynthesis; glycine from L-serine: step 1/1. Its function is as follows. Catalyzes the reversible interconversion of serine and glycine with tetrahydrofolate (THF) serving as the one-carbon carrier. This reaction serves as the major source of one-carbon groups required for the biosynthesis of purines, thymidylate, methionine, and other important biomolecules. Also exhibits THF-independent aldolase activity toward beta-hydroxyamino acids, producing glycine and aldehydes, via a retro-aldol mechanism. This is Serine hydroxymethyltransferase from Methylobacillus flagellatus (strain ATCC 51484 / DSM 6875 / VKM B-1610 / KT).